We begin with the raw amino-acid sequence, 206 residues long: Large ribosomal subunit protein uL4 (206 aa).

The interval 47 to 75 (GTQSAKTRAEVSGGGIKPWRQKGTGRARQ) is disordered.

This sequence belongs to the universal ribosomal protein uL4 family. As to quaternary structure, part of the 50S ribosomal subunit.

Its function is as follows. One of the primary rRNA binding proteins, this protein initially binds near the 5'-end of the 23S rRNA. It is important during the early stages of 50S assembly. It makes multiple contacts with different domains of the 23S rRNA in the assembled 50S subunit and ribosome. In terms of biological role, forms part of the polypeptide exit tunnel. This Clostridium botulinum (strain 657 / Type Ba4) protein is Large ribosomal subunit protein uL4.